Consider the following 626-residue polypeptide: Colicin-Ib (626 aa).

Residues 276–286 are compositionally biased toward polar residues; that stretch reads QQLTQQKNTPD. The disordered stretch occupies residues 276-308; that stretch reads QQLTQQKNTPDGKTIVSPEKFPGRSSTNHSIVV. A helical membrane pass occupies residues 588-612; sequence FSVMLGTPVGILGFAIIMAAVSALV.

The protein belongs to the channel forming colicin family.

It is found in the host membrane. Functionally, this colicin is a channel-forming colicin. This class of transmembrane toxins depolarize the cytoplasmic membrane, leading to dissipation of cellular energy. In terms of biological role, colicins are polypeptide toxins produced by and active against E.coli and closely related bacteria. The sequence is that of Colicin-Ib (cib) from Escherichia coli.